A 131-amino-acid chain; its full sequence is NADPH-dependent 7-cyano-7-deazaguanine reductase (131 aa).

Cys41 functions as the Thioimide intermediate in the catalytic mechanism. The active-site Proton donor is the Asp48. Substrate-binding positions include 63-65 and 82-83; these read VEL and HE.

Belongs to the GTP cyclohydrolase I family. QueF type 1 subfamily.

Its subcellular location is the cytoplasm. It catalyses the reaction 7-aminomethyl-7-carbaguanine + 2 NADP(+) = 7-cyano-7-deazaguanine + 2 NADPH + 3 H(+). Its pathway is tRNA modification; tRNA-queuosine biosynthesis. Catalyzes the NADPH-dependent reduction of 7-cyano-7-deazaguanine (preQ0) to 7-aminomethyl-7-deazaguanine (preQ1). The sequence is that of NADPH-dependent 7-cyano-7-deazaguanine reductase from Nitratiruptor sp. (strain SB155-2).